Reading from the N-terminus, the 567-residue chain is PHD finger protein 1 (567 aa).

A disordered region spans residues 1–31; sequence MAQPPRLSRSGASSLWDPASPAPTSGPRPRL. The Tudor domain maps to 29 to 86; sequence PRLWEGQDVLARWTDGLLYLGTIKKVDSAREVCLVQFEDDSQFLVLWKDISPAALPGE. PHD-type zinc fingers lie at residues 87 to 142 and 186 to 240; these read ELLC…CVFA and QSYC…CRGG. Disordered stretches follow at residues 333-441 and 455-537; these read ARMP…TDAR and HPSA…GYLS. A Phosphoserine modification is found at Gly360. Residues 371-386 are compositionally biased toward basic and acidic residues; that stretch reads PEPEPLRRRQKGKVEE. Phosphoserine is present on Ser420. 3 stretches are compositionally biased toward low complexity: residues 423 to 433, 456 to 470, and 488 to 510; these read PNQSYQGSSGY, PSAS…SGPP, and SAPH…LPRR. Gly residues predominate over residues 524 to 534; that stretch reads GTGGGVRGGVG.

It belongs to the Polycomblike family. In terms of assembly, interacts with CHMP1. Associated component of the PRC2 complex. Interacts with p53/TP53. In terms of tissue distribution, highest levels in heart, skeletal muscle, and pancreas, lower levels in brain, placenta, lung, liver and kidney.

The protein localises to the nucleus. The protein resides in the cytoplasm. Its subcellular location is the cytoskeleton. It localises to the microtubule organizing center. It is found in the centrosome. Its function is as follows. Polycomb group (PcG) that specifically binds histone H3 trimethylated at 'Lys-36' (H3K36me3) and recruits the PRC2 complex. Involved in DNA damage response and is recruited at double-strand breaks (DSBs). Acts by binding to H3K36me3, a mark for transcriptional activation, and recruiting the PRC2 complex: it is however unclear whether recruitment of the PRC2 complex to H3K36me3 leads to enhance or inhibit H3K27me3 methylation mediated by the PRC2 complex. According to some reports, PRC2 recruitment by PHF1 promotes H3K27me3 and subsequent gene silencing by inducing spreading of PRC2 and H3K27me3 into H3K36me3 loci. According to another report, PHF1 recruits the PRC2 complex at double-strand breaks (DSBs) and inhibits the activity of PRC2. Regulates p53/TP53 stability and prolonges its turnover: may act by specifically binding to a methylated from of p53/TP53. The protein is PHD finger protein 1 (PHF1) of Homo sapiens (Human).